Consider the following 485-residue polypeptide: Ribulose bisphosphate carboxylase large chain 2 (485 aa).

The substrate site is built by asparagine 124 and threonine 174. Lysine 176 (proton acceptor) is an active-site residue. Lysine 178 provides a ligand contact to substrate. Mg(2+) contacts are provided by lysine 202, aspartate 204, and glutamate 205. At lysine 202 the chain carries N6-carboxylysine. Catalysis depends on histidine 294, which acts as the Proton acceptor. The substrate site is built by arginine 295, histidine 327, and serine 379.

The protein belongs to the RuBisCO large chain family. Type I subfamily. Heterohexadecamer of 8 large chains and 8 small chains. Requires Mg(2+) as cofactor.

The enzyme catalyses 2 (2R)-3-phosphoglycerate + 2 H(+) = D-ribulose 1,5-bisphosphate + CO2 + H2O. The catalysed reaction is D-ribulose 1,5-bisphosphate + O2 = 2-phosphoglycolate + (2R)-3-phosphoglycerate + 2 H(+). RuBisCO catalyzes two reactions: the carboxylation of D-ribulose 1,5-bisphosphate, the primary event in carbon dioxide fixation, as well as the oxidative fragmentation of the pentose substrate. Both reactions occur simultaneously and in competition at the same active site. This is Ribulose bisphosphate carboxylase large chain 2 from Rhodopseudomonas palustris (strain BisB5).